The primary structure comprises 193 residues: Ribosome hibernation promotion factor (193 aa).

The protein belongs to the HPF/YfiA ribosome-associated protein family. Long HPF subfamily. Interacts with 100S ribosomes.

It localises to the cytoplasm. Its function is as follows. Might modulate either transcription and/or translation. In terms of biological role, required for dimerization of active 70S ribosomes into 100S ribosomes in stationary phase; 100S ribosomes are translationally inactive and sometimes present during exponential growth. This chain is Ribosome hibernation promotion factor, found in Picosynechococcus sp. (strain ATCC 27264 / PCC 7002 / PR-6) (Agmenellum quadruplicatum).